A 180-amino-acid polypeptide reads, in one-letter code: MKLKFISMAVFSALTLGVATNASAVTTVNGGTVHFKGEVVNAACAVNTNSFDQTVNLGQVRSERLKVDGAKSNPVGFTIELNDCDSQVSAGAGIVFSGPAVTGKTDVLALQSSAAGSATNVGVQITDHTGKVVPLDGTASSTFTLTDGTNKIPFQAVYYATGQATAGIANADATFKVQYQ.

The signal sequence occupies residues 1-23 (MKLKFISMAVFSALTLGVATNAS). A disulfide bridge links C44 with C84.

It belongs to the fimbrial protein family.

It localises to the fimbrium. Functionally, fimbriae (also called pili), polar filaments radiating from the surface of the bacterium to a length of 0.5-1.5 micrometers and numbering 100-300 per cell, enable bacteria to colonize the epithelium of specific host organs. This chain is Type-1 fimbrial protein, C chain (pilC), found in Escherichia coli O6:H1 (strain CFT073 / ATCC 700928 / UPEC).